The following is a 265-amino-acid chain: MNWGFLQGILSGVNKYSTALGRIWLSVVFIFRVLVYVVAAEEVWDDEQKDFICNTKQPGCPNVCYDEFFPVSHVRLWALQLILVTCPSLLVVMHVAYREERERKHRLKHGPDAPALYSNLSKKRGGLWWTYLLSLIFKAAVDSGFLYIFHCIYKDYDMPRVVACSVQPCPHTVDCYISRPTEKKVFTYFMVVTAAICILLNLSEVAYLVGKRCMEVFRPRRQKTSRRHQLPDTCPPYVISKGHPQDESTVLTKAGMATVDAGVYP.

An intramembrane segment occupies 2 to 13 (NWGFLQGILSGV). Topologically, residues 14-20 (NKYSTAL) are cytoplasmic. The chain crosses the membrane as a helical span at residues 21-40 (GRIWLSVVFIFRVLVYVVAA). Residues 41–73 (EEVWDDEQKDFICNTKQPGCPNVCYDEFFPVSH) are Extracellular-facing. Cystine bridges form between C53–C175, C60–C169, and C64–C164. The helical transmembrane segment at 74–94 (VRLWALQLILVTCPSLLVVMH) threads the bilayer. The Cytoplasmic segment spans residues 95–130 (VAYREERERKHRLKHGPDAPALYSNLSKKRGGLWWT). A helical transmembrane segment spans residues 131 to 151 (YLLSLIFKAAVDSGFLYIFHC). The Extracellular portion of the chain corresponds to 152-184 (IYKDYDMPRVVACSVQPCPHTVDCYISRPTEKK). Residues 185 to 205 (VFTYFMVVTAAICILLNLSEV) traverse the membrane as a helical segment. Over 206–265 (AYLVGKRCMEVFRPRRQKTSRRHQLPDTCPPYVISKGHPQDESTVLTKAGMATVDAGVYP) the chain is Cytoplasmic.

It belongs to the connexin family. Beta-type (group I) subfamily. As to quaternary structure, a hemichannel or connexon is composed of a hexamer of connexins. A functional gap junction is formed by the apposition of two hemichannels. Forms heteromeric channels with GJB2. Detected in adult heart, kidney, skin and cochlea, where it is detected in spiral ganglion, stria vascularis, spiral limbus and spiral ligament (at protein level).

It localises to the cell membrane. It is found in the cell junction. Its subcellular location is the gap junction. Functionally, structural component of gap junctions. Gap junctions are dodecameric channels that connect the cytoplasm of adjoining cells. They are formed by the docking of two hexameric hemichannels, one from each cell membrane. Small molecules and ions diffuse from one cell to a neighboring cell via the central pore. The polypeptide is Gap junction beta-4 protein (Gjb4) (Rattus norvegicus (Rat)).